A 185-amino-acid chain; its full sequence is ADP-ribose 1''-phosphate phosphatase (185 aa).

Residues 1–185 enclose the Macro domain; it reads MSPARLRITD…VVEVVAWERA (185 aa). Residues 13–15, 27–29, 34–39, and 142–148 each bind substrate; these read GDL, ACN, WGGGIA, and INAGLFA.

This sequence belongs to the POA1 family.

The catalysed reaction is ADP-alpha-D-ribose 1''-phosphate + H2O = ADP-D-ribose + phosphate. Functionally, highly specific phosphatase involved in the metabolism of ADP-ribose 1''-phosphate (Appr1p) which is produced as a consequence of tRNA splicing. This is ADP-ribose 1''-phosphate phosphatase (POA1) from Chaetomium globosum (strain ATCC 6205 / CBS 148.51 / DSM 1962 / NBRC 6347 / NRRL 1970) (Soil fungus).